The primary structure comprises 748 residues: tRNA endonuclease ANKZF1 (748 aa).

Residues 96 to 120 (LFCSACDQIFQNHQEQREHYKLDWH) form a C2H2-type zinc finger. A disordered region spans residues 135-185 (SASDFEQQSSTGDLSSISGSDDTDSSSEEDLLPLDEGRAESEKPNRPPGFY). Residues 143-154 (SSTGDLSSISGS) are compositionally biased toward low complexity. Residues 155–167 (DDTDSSSEEDLLP) are compositionally biased toward acidic residues. Residues 169-179 (DEGRAESEKPN) are compositionally biased toward basic and acidic residues. The 144-residue stretch at 227–370 (GPRYYVVLMA…QRVLHKLTTL (144 aa)) folds into the VLRF1 domain. Residue Gln-270 is part of the active site. 2 positions are modified to phosphoserine: Ser-282 and Ser-385. Basic and acidic residues predominate over residues 383–408 (FHSPETHWKPVREERKKDTEKEKTKV). 2 disordered regions span residues 383–438 (FHSP…SEVE) and 460–497 (RRRR…TQEV). The span at 429-438 (SQEEDGSEVE) shows a compositional bias: acidic residues. Residues 484-497 (QPQDEPFSQPTQEV) show a composition bias toward polar residues. One copy of the ANK 1 repeat lies at 515 to 545 (ELWDTLLAACRAGEVEVLKLQLATGLVDPGV). Phosphoserine is present on Ser-555. The ANK 2 repeat unit spans residues 556-585 (GGFTLLHAAAAAGRGLVVRLLLEAGADPTV). Residues 621-677 (KARVPGPLTQEMEARQATRKKEQKAARRQREQQQRKQREQEEQEQEEQRRFAALSDR) form a disordered region. A coiled-coil region spans residues 628 to 681 (LTQEMEARQATRKKEQKAARRQREQQQRKQREQEEQEQEEQRRFAALSDREKRA). Thr-629 is modified (phosphothreonine). Residues 632-677 (MEARQATRKKEQKAARRQREQQQRKQREQEEQEQEEQRRFAALSDR) are compositionally biased toward basic and acidic residues. The segment at 654–666 (QRKQREQEEQEQE) is VCP/p97-interacting motif (VIM). Phosphoserine is present on Ser-702.

The protein belongs to the ANKZF1/VMS1 family. As to quaternary structure, interacts (via VIM motif) with VCP.

It is found in the cytoplasm. Functionally, endonuclease that cleaves polypeptidyl-tRNAs downstream of the ribosome-associated quality control (RQC) pathway to release incompletely synthesized polypeptides for degradation. The RQC pathway disassembles aberrantly stalled translation complexes to recycle or degrade the constituent parts. ANKZF1 acts downstream disassembly of stalled ribosomes and specifically cleaves off the terminal 3'-CCA nucleotides universal to all tRNAs from polypeptidyl-tRNAs, releasing (1) ubiquitinated polypeptides from 60S ribosomal subunit for degradation and (2) cleaved tRNAs. ANKZF1-cleaved tRNAs are then repaired and recycled by ELAC1 and TRNT1. Also plays a role in the cellular response to hydrogen peroxide and in the maintenance of mitochondrial integrity under conditions of cellular stress. In Mus musculus (Mouse), this protein is tRNA endonuclease ANKZF1.